The following is a 199-amino-acid chain: NAD(P)H dehydrogenase (quinone) (199 aa).

The 187-residue stretch at 4–190 folds into the Flavodoxin-like domain; the sequence is VLVLYYSSYG…EGARHQGELV (187 aa). FMN contacts are provided by residues 10-15 and 78-80; these read SSYGHI and TRY. Tyr12 contributes to the NAD(+) binding site. Trp98 contacts substrate. Residues 113 to 119 and His134 each bind FMN; that span reads STATQHG.

The protein belongs to the WrbA family. FMN is required as a cofactor.

It carries out the reaction a quinone + NADH + H(+) = a quinol + NAD(+). The enzyme catalyses a quinone + NADPH + H(+) = a quinol + NADP(+). The polypeptide is NAD(P)H dehydrogenase (quinone) (Paraburkholderia phymatum (strain DSM 17167 / CIP 108236 / LMG 21445 / STM815) (Burkholderia phymatum)).